Reading from the N-terminus, the 126-residue chain is MHLSLLKTKIHRATVTHSELNYEGSIAIDDNLLAATGIREFEQVHIWDVTNGARFSTYAIRAEAGSGVVSLNGGAARHVQVGDIIIIAAFASMTEQEADSFKPKLVYVDGKNQITHTNDTIPTQAA.

The active-site Schiff-base intermediate with substrate; via pyruvic acid is the S25. S25 carries the post-translational modification Pyruvic acid (Ser). A substrate-binding site is contributed by T57. Y58 acts as the Proton donor in catalysis. Residue 73 to 75 (GGA) coordinates substrate.

This sequence belongs to the PanD family. In terms of assembly, heterooctamer of four alpha and four beta subunits. The cofactor is pyruvate. Is synthesized initially as an inactive proenzyme, which is activated by self-cleavage at a specific serine bond to produce a beta-subunit with a hydroxyl group at its C-terminus and an alpha-subunit with a pyruvoyl group at its N-terminus.

It is found in the cytoplasm. The catalysed reaction is L-aspartate + H(+) = beta-alanine + CO2. It functions in the pathway cofactor biosynthesis; (R)-pantothenate biosynthesis; beta-alanine from L-aspartate: step 1/1. Functionally, catalyzes the pyruvoyl-dependent decarboxylation of aspartate to produce beta-alanine. In Stenotrophomonas maltophilia (strain K279a), this protein is Aspartate 1-decarboxylase.